The chain runs to 265 residues: 3-methyl-2-oxobutanoate hydroxymethyltransferase (265 aa).

The Mg(2+) site is built by Asp45 and Asp84. 3-methyl-2-oxobutanoate contacts are provided by residues 45–46 (DS), Asp84, and Lys112. A Mg(2+)-binding site is contributed by Glu114. Glu181 acts as the Proton acceptor in catalysis.

This sequence belongs to the PanB family. Homodecamer; pentamer of dimers. The cofactor is Mg(2+).

The protein resides in the cytoplasm. It catalyses the reaction 3-methyl-2-oxobutanoate + (6R)-5,10-methylene-5,6,7,8-tetrahydrofolate + H2O = 2-dehydropantoate + (6S)-5,6,7,8-tetrahydrofolate. Its pathway is cofactor biosynthesis; (R)-pantothenate biosynthesis; (R)-pantoate from 3-methyl-2-oxobutanoate: step 1/2. Its function is as follows. Catalyzes the reversible reaction in which hydroxymethyl group from 5,10-methylenetetrahydrofolate is transferred onto alpha-ketoisovalerate to form ketopantoate. The protein is 3-methyl-2-oxobutanoate hydroxymethyltransferase of Yersinia enterocolitica serotype O:8 / biotype 1B (strain NCTC 13174 / 8081).